The primary structure comprises 729 residues: Cytoplasmic polyadenylation element-binding protein 4 (729 aa).

Disordered regions lie at residues 20-49 (FPVRFHPHLQPPHHHQNATPSPAAFINNNT) and 78-133 (EKAK…KEKI). The span at 24–35 (FHPHLQPPHHHQ) shows a compositional bias: basic residues. Low complexity predominate over residues 83-96 (QQQEQQDPLEKQQL). Residues serine 97, serine 99, and serine 137 each carry the phosphoserine modification. Residues 218-328 (FGGSFSPQIG…RGLNGGITPL (111 aa)) form a disordered region. Residues 232-249 (HHPHHPHFQHHHSQHQQQ) show a composition bias toward basic residues. Phosphoserine occurs at positions 252 and 255. The span at 285–300 (WSSYQSPSPTPSSSWS) shows a compositional bias: low complexity. Positions 301–313 (PGGGGYGGWGGSQ) are enriched in gly residues. Threonine 326 is subject to Phosphothreonine. 2 positions are modified to phosphoserine: serine 330 and serine 332. RRM domains are found at residues 472 to 563 (RKVF…PWNL) and 580 to 662 (KTIF…PYVL). Positions 541–543 (KLY) are RNA-binding. The Zn(2+) site is built by cysteine 667, cysteine 675, cysteine 684, cysteine 689, cysteine 694, cysteine 697, histidine 702, and histidine 710.

This sequence belongs to the RRM CPEB family. In terms of assembly, interacts with TOB1. Expressed in pancreas in islets and ductal cells (at protein level). Expressed in melanocytes.

The protein localises to the cytoplasm. It is found in the cell projection. The protein resides in the dendrite. Its subcellular location is the dendritic spine. It localises to the postsynaptic density. The protein localises to the axon. It is found in the growth cone. The protein resides in the endoplasmic reticulum. Its subcellular location is the perinuclear region. Functionally, sequence-specific RNA-binding protein that binds to the cytoplasmic polyadenylation element (CPE), an uridine-rich sequence element (consensus sequence 5'-UUUUUAU-3') within the mRNA 3'-UTR. RNA binding results in a clear conformational change analogous to the Venus fly trap mechanism. Regulates activation of unfolded protein response (UPR) in the process of adaptation to ER stress in liver, by maintaining translation of CPE-regulated mRNAs in conditions in which global protein synthesis is inhibited. Required for cell cycle progression, specifically for cytokinesis and chromosomal segregation. Plays a role as an oncogene promoting tumor growth and progression by positively regulating translation of t-plasminogen activator/PLAT. Stimulates proliferation of melanocytes. In contrast to CPEB1 and CPEB3, does not play role in synaptic plasticity, learning and memory. The protein is Cytoplasmic polyadenylation element-binding protein 4 (CPEB4) of Homo sapiens (Human).